We begin with the raw amino-acid sequence, 164 residues long: MPGVLRALLLLAAAAPLLADVNVMKDVTLGFGQALDKCREESQLTEEKMEEFFHFWRDDFKFEHRELGCAIQCMSRHFNLLTDSSRMHHDNTEKFIQSFPNGEVLARQMVELIHSCEKQFDHEEDHCWRISHLADCFKSSCVQRGIAPSMELMMTEFIMEAEAR.

The N-terminal stretch at 1 to 19 is a signal peptide; the sequence is MPGVLRALLLLAAAAPLLA. 3 cysteine pairs are disulfide-bonded: Cys-38-Cys-73, Cys-69-Cys-127, and Cys-116-Cys-136.

It belongs to the PBP/GOBP family. Antenna.

Functionally, present in the aqueous fluid surrounding olfactory sensory dendrites and are thought to aid in the capture and transport of hydrophobic odorants into and through this fluid. The chain is General odorant-binding protein 1 from Heliothis virescens (Tobacco budworm moth).